The chain runs to 101 residues: Small ribosomal subunit protein uS14 (101 aa).

This sequence belongs to the universal ribosomal protein uS14 family. As to quaternary structure, part of the 30S ribosomal subunit. Contacts proteins S3 and S10.

Functionally, binds 16S rRNA, required for the assembly of 30S particles and may also be responsible for determining the conformation of the 16S rRNA at the A site. The protein is Small ribosomal subunit protein uS14 of Ectopseudomonas mendocina (strain ymp) (Pseudomonas mendocina).